A 205-amino-acid chain; its full sequence is Cytochrome c oxidase subunit 2 (205 aa).

Cu cation is bound by residues histidine 115, cysteine 150, glutamate 152, cysteine 154, histidine 158, and methionine 161. Mg(2+) is bound at residue glutamate 152.

It belongs to the cytochrome c oxidase subunit 2 family. As to quaternary structure, component of the cytochrome c oxidase (complex IV, CIV), a multisubunit enzyme composed of a catalytic core of 3 subunits and several supernumerary subunits. The complex exists as a monomer or a dimer and forms supercomplexes (SCs) in the inner mitochondrial membrane with ubiquinol-cytochrome c oxidoreductase (cytochrome b-c1 complex, complex III, CIII). It depends on Cu cation as a cofactor.

The protein resides in the mitochondrion inner membrane. The catalysed reaction is 4 Fe(II)-[cytochrome c] + O2 + 8 H(+)(in) = 4 Fe(III)-[cytochrome c] + 2 H2O + 4 H(+)(out). Its function is as follows. Component of the cytochrome c oxidase, the last enzyme in the mitochondrial electron transport chain which drives oxidative phosphorylation. The respiratory chain contains 3 multisubunit complexes succinate dehydrogenase (complex II, CII), ubiquinol-cytochrome c oxidoreductase (cytochrome b-c1 complex, complex III, CIII) and cytochrome c oxidase (complex IV, CIV), that cooperate to transfer electrons derived from NADH and succinate to molecular oxygen, creating an electrochemical gradient over the inner membrane that drives transmembrane transport and the ATP synthase. Cytochrome c oxidase is the component of the respiratory chain that catalyzes the reduction of oxygen to water. Electrons originating from reduced cytochrome c in the intermembrane space (IMS) are transferred via the dinuclear copper A center (CU(A)) of subunit 2 and heme A of subunit 1 to the active site in subunit 1, a binuclear center (BNC) formed by heme A3 and copper B (CU(B)). The BNC reduces molecular oxygen to 2 water molecules using 4 electrons from cytochrome c in the IMS and 4 protons from the mitochondrial matrix. This is Cytochrome c oxidase subunit 2 (COII) from Paramecium tetraurelia.